Reading from the N-terminus, the 261-residue chain is Carnitinyl-CoA dehydratase (261 aa).

The Nucleophile role is filled by glutamate 111. Glutamate 131 (proton acceptor) is an active-site residue.

It belongs to the enoyl-CoA hydratase/isomerase family.

It catalyses the reaction (R)-carnitinyl-CoA = crotonobetainyl-CoA + H2O. It functions in the pathway amine and polyamine metabolism; carnitine metabolism. Catalyzes the reversible dehydration of L-carnitinyl-CoA to crotonobetainyl-CoA. In Salmonella enteritidis PT4 (strain P125109), this protein is Carnitinyl-CoA dehydratase.